A 253-amino-acid chain; its full sequence is Small ribosomal subunit protein uS3 (253 aa).

In terms of domain architecture, KH type-2 spans 38 to 106 (IRKYIHARLS…EVQINIFEIK (69 aa)). A disordered region spans residues 216 to 253 (AGMDKKQAGQGGGKGGDSPRGDRKPFNKGGKPDARKRK). Positions 232–253 (DSPRGDRKPFNKGGKPDARKRK) are enriched in basic and acidic residues.

The protein belongs to the universal ribosomal protein uS3 family. As to quaternary structure, part of the 30S ribosomal subunit. Forms a tight complex with proteins S10 and S14.

Binds the lower part of the 30S subunit head. Binds mRNA in the 70S ribosome, positioning it for translation. This chain is Small ribosomal subunit protein uS3, found in Flavobacterium psychrophilum (strain ATCC 49511 / DSM 21280 / CIP 103535 / JIP02/86).